Here is a 510-residue protein sequence, read N- to C-terminus: NAD(P)H-quinone oxidoreductase subunit 2 B, chloroplastic (510 aa).

13 consecutive transmembrane segments (helical) span residues 24–44 (LLLFHGSFIFPECILIFGLIL), 57–77 (IPWLYFISSTSLVMSITALLF), 99–119 (IFQFLILLCSTLCIPLSVEYI), 124–144 (MAITEFLLFVLTATLGGMFLC), 150–170 (ITIFVAPECFSLCSYLLSGYT), 183–203 (YLLMGGASSSILVHGFSWLYG), 227–247 (PGISIALIFITVGIGFKLSPA), 295–315 (WHLLLEILAILSMILGNLIAI), 323–343 (MLAYSSIGQIGYVIIGIIVGD), 347–367 (GYASMITYMLFYISMNLGTFA), 395–415 (ALSSALCLLSLGGLPPLAGFF), 418–438 (LHLFWCGWQAGLYFLVSIGLL), and 484–504 (MIVCVIASTIPGISMNPIIAI).

It belongs to the complex I subunit 2 family. NDH is composed of at least 16 different subunits, 5 of which are encoded in the nucleus.

The protein localises to the plastid. The protein resides in the chloroplast thylakoid membrane. The catalysed reaction is a plastoquinone + NADH + (n+1) H(+)(in) = a plastoquinol + NAD(+) + n H(+)(out). It carries out the reaction a plastoquinone + NADPH + (n+1) H(+)(in) = a plastoquinol + NADP(+) + n H(+)(out). In terms of biological role, NDH shuttles electrons from NAD(P)H:plastoquinone, via FMN and iron-sulfur (Fe-S) centers, to quinones in the photosynthetic chain and possibly in a chloroplast respiratory chain. The immediate electron acceptor for the enzyme in this species is believed to be plastoquinone. Couples the redox reaction to proton translocation, and thus conserves the redox energy in a proton gradient. The sequence is that of NAD(P)H-quinone oxidoreductase subunit 2 B, chloroplastic from Liriodendron tulipifera (Tuliptree).